A 1377-amino-acid chain; its full sequence is DNA-directed RNA polymerase subunit beta (1377 aa).

This sequence belongs to the RNA polymerase beta chain family. As to quaternary structure, the RNAP catalytic core consists of 2 alpha, 1 beta, 1 beta' and 1 omega subunit. When a sigma factor is associated with the core the holoenzyme is formed, which can initiate transcription.

The catalysed reaction is RNA(n) + a ribonucleoside 5'-triphosphate = RNA(n+1) + diphosphate. DNA-dependent RNA polymerase catalyzes the transcription of DNA into RNA using the four ribonucleoside triphosphates as substrates. The polypeptide is DNA-directed RNA polymerase subunit beta (Azoarcus sp. (strain BH72)).